A 234-amino-acid chain; its full sequence is NAD-dependent protein deacylase (234 aa).

Residues 1 to 234 enclose the Deacetylase sirtuin-type domain; that stretch reads MTKQVRIVVL…LVPHYLAQFL (234 aa). Residue 12-31 participates in NAD(+) binding; the sequence is GAGISAESGIRTFRATDGLW. 2 residues coordinate substrate: tyrosine 56 and arginine 59. 93–96 is a binding site for NAD(+); sequence QNVD. The active-site Proton acceptor is the histidine 111. Cysteine 119 and cysteine 138 together coordinate Zn(2+). NAD(+) contacts are provided by residues 178–180, 204–206, and alanine 222; these read GTS and NLE.

Belongs to the sirtuin family. Class III subfamily. Zn(2+) serves as cofactor.

Its subcellular location is the cytoplasm. The enzyme catalyses N(6)-acetyl-L-lysyl-[protein] + NAD(+) + H2O = 2''-O-acetyl-ADP-D-ribose + nicotinamide + L-lysyl-[protein]. It catalyses the reaction N(6)-succinyl-L-lysyl-[protein] + NAD(+) + H2O = 2''-O-succinyl-ADP-D-ribose + nicotinamide + L-lysyl-[protein]. Functionally, NAD-dependent lysine deacetylase and desuccinylase that specifically removes acetyl and succinyl groups on target proteins. Modulates the activities of several proteins which are inactive in their acylated form. This is NAD-dependent protein deacylase from Pasteurella multocida (strain Pm70).